The primary structure comprises 126 residues: Glycine cleavage system H protein (126 aa).

The Lipoyl-binding domain maps to 22–104 (VATIGITEYA…YEKAWMVKVE (83 aa)). Lys-63 carries the N6-lipoyllysine modification.

This sequence belongs to the GcvH family. As to quaternary structure, the glycine cleavage system is composed of four proteins: P, T, L and H. (R)-lipoate serves as cofactor.

The glycine cleavage system catalyzes the degradation of glycine. The H protein shuttles the methylamine group of glycine from the P protein to the T protein. Its function is as follows. Is also involved in protein lipoylation via its role as an octanoyl/lipoyl carrier protein intermediate. In Staphylococcus aureus (strain JH1), this protein is Glycine cleavage system H protein.